Here is a 261-residue protein sequence, read N- to C-terminus: Acidic leucine-rich nuclear phosphoprotein 32 family member B (261 aa).

LRR repeat units lie at residues 16-40 (PAAV…LTAE), 43-64 (NLEF…PKLP), 65-87 (KLKK…AEKL), and 89-110 (NLTH…EPLK). The residue at position 86 (Lys-86) is an N6-acetyllysine. In terms of domain architecture, LRRCT spans 123–161 (CEVTNLNDYRESVFKLLPQLTYLDGYDREDREAPDSDAE). The interval 149 to 261 (DREDREAPDS…RETDDEGEDD (113 aa)) is disordered. Residues 157-243 (DSDAEVDGVD…DEDEDEEEEE (87 aa)) show a composition bias toward acidic residues. At Ser-158 the chain carries Phosphoserine. Residues 244–254 (SGKGEGRKRET) are compositionally biased toward basic and acidic residues. Phosphothreonine is present on Thr-254.

Belongs to the ANP32 family. As to quaternary structure, monomer. Interacts with histones H3 and H4. In terms of processing, some glutamate residues are glycylated by TTLL8. This modification occurs exclusively on glutamate residues and results in a glycine chain on the gamma-carboxyl group.

Its subcellular location is the nucleus. In terms of biological role, multifunctional protein working as a cell cycle progression factor as well as a cell survival factor. Required for the progression from the G1 to the S phase. Anti-apoptotic protein which functions as a caspase-3 inhibitor. Has no phosphatase 2A (PP2A) inhibitor activity. Exhibits histone chaperone properties, stimulating core histones to assemble into a nucleosome. In Ovis aries (Sheep), this protein is Acidic leucine-rich nuclear phosphoprotein 32 family member B (ANP32B).